Consider the following 225-residue polypeptide: NAD(P)H-quinone oxidoreductase subunit K, chloroplastic (225 aa).

[4Fe-4S] cluster contacts are provided by Cys43, Cys44, Cys108, and Cys139.

It belongs to the complex I 20 kDa subunit family. In terms of assembly, NDH is composed of at least 16 different subunits, 5 of which are encoded in the nucleus. [4Fe-4S] cluster is required as a cofactor.

Its subcellular location is the plastid. It is found in the chloroplast thylakoid membrane. It catalyses the reaction a plastoquinone + NADH + (n+1) H(+)(in) = a plastoquinol + NAD(+) + n H(+)(out). The catalysed reaction is a plastoquinone + NADPH + (n+1) H(+)(in) = a plastoquinol + NADP(+) + n H(+)(out). Its function is as follows. NDH shuttles electrons from NAD(P)H:plastoquinone, via FMN and iron-sulfur (Fe-S) centers, to quinones in the photosynthetic chain and possibly in a chloroplast respiratory chain. The immediate electron acceptor for the enzyme in this species is believed to be plastoquinone. Couples the redox reaction to proton translocation, and thus conserves the redox energy in a proton gradient. This Liriodendron tulipifera (Tuliptree) protein is NAD(P)H-quinone oxidoreductase subunit K, chloroplastic.